We begin with the raw amino-acid sequence, 638 residues long: Chaperone protein DnaK (638 aa).

Thr-197 bears the Phosphothreonine; by autocatalysis mark. The disordered stretch occupies residues 600–638; it reads SGAQGGAQAGPGAGAGQQANQGSSNNKEDIQDADFEEVK. Over residues 602–614 the composition is skewed to gly residues; the sequence is AQGGAQAGPGAGA. The segment covering 615–624 has biased composition (low complexity); sequence GQQANQGSSN. A compositionally biased stretch (basic and acidic residues) spans 625-638; that stretch reads NKEDIQDADFEEVK.

It belongs to the heat shock protein 70 family.

Functionally, acts as a chaperone. The protein is Chaperone protein DnaK of Phocaeicola vulgatus (strain ATCC 8482 / DSM 1447 / JCM 5826 / CCUG 4940 / NBRC 14291 / NCTC 11154) (Bacteroides vulgatus).